A 115-amino-acid chain; its full sequence is Large ribosomal subunit protein bL20 (115 aa).

The protein belongs to the bacterial ribosomal protein bL20 family.

In terms of biological role, binds directly to 23S ribosomal RNA and is necessary for the in vitro assembly process of the 50S ribosomal subunit. It is not involved in the protein synthesizing functions of that subunit. The chain is Large ribosomal subunit protein bL20 from Pelodictyon phaeoclathratiforme (strain DSM 5477 / BU-1).